Reading from the N-terminus, the 121-residue chain is Large ribosomal subunit protein bL12 (121 aa).

It belongs to the bacterial ribosomal protein bL12 family. In terms of assembly, homodimer. Part of the ribosomal stalk of the 50S ribosomal subunit. Forms a multimeric L10(L12)X complex, where L10 forms an elongated spine to which 2 to 4 L12 dimers bind in a sequential fashion. Binds GTP-bound translation factors.

Forms part of the ribosomal stalk which helps the ribosome interact with GTP-bound translation factors. Is thus essential for accurate translation. In Lactococcus lactis subsp. cremoris (strain MG1363), this protein is Large ribosomal subunit protein bL12.